The sequence spans 248 residues: Probable phosphatase VFMJ11_A0899 (248 aa).

9 residues coordinate Zn(2+): His8, His10, His16, His41, Glu74, His101, His131, Asp193, and His195.

The protein belongs to the PHP family. It depends on Zn(2+) as a cofactor.

This is Probable phosphatase VFMJ11_A0899 from Aliivibrio fischeri (strain MJ11) (Vibrio fischeri).